Consider the following 240-residue polypeptide: MVSPVTVVKSEGPKLVPFFKATCVYFVLWLPSSSPSWVSALIKCLPIFCLWLFLLAHGLGFLLTHPSATRIFVGLVFSAIGDAFLIWQDQGYFVHGMLMFAVTHMLYASAFGMRPLGLRTGLLMVILSGLCYAFLYPNLTGAFTYVVGVYVAIIGFMGWRAMAGLQLVGAAWRWTELAAGTGALLFIVSDLTIALDKFCFPVPYSRALIMSTYYAAQMLIALSAVESREPVEDYRLSKAK.

Residues Met1–Ala21 lie on the Cytoplasmic side of the membrane. A helical membrane pass occupies residues Thr22 to Ile42. Lys43 is a topological domain (extracellular). A helical membrane pass occupies residues Cys44–Thr64. Topologically, residues His65–Arg70 are cytoplasmic. Residues Ile71–Gly91 traverse the membrane as a helical segment. Tyr92 is a topological domain (extracellular). The helical transmembrane segment at Phe93–Met113 threads the bilayer. At Arg114–Pro115 the chain is on the cytoplasmic side. Residues Leu116–Tyr136 traverse the membrane as a helical segment. At Pro137–Asn138 the chain is on the extracellular side. Residues Leu139 to Trp159 traverse the membrane as a helical segment. Residues Arg160–Trp174 are Cytoplasmic-facing. The chain crosses the membrane as a helical span at residues Thr175–Leu195. Over Asp196 to Arg206 the chain is Extracellular. Residues Ala207–Ser227 form a helical membrane-spanning segment. The Cytoplasmic portion of the chain corresponds to Arg228–Lys240.

Belongs to the TMEM86 family.

The protein resides in the endoplasmic reticulum membrane. It carries out the reaction a 1-O-(1Z-alkenyl)-sn-glycero-3-phosphocholine + H2O = a 2,3-saturated aldehyde + sn-glycerol 3-phosphocholine. The catalysed reaction is a 1-O-(1Z-alkenyl)-sn-glycero-3-phosphoethanolamine + H2O = a 2,3-saturated aldehyde + sn-glycero-3-phosphoethanolamine. Functionally, catalyzes the hydrolysis of the vinyl ether bond of choline or ethanolamine lysoplasmalogens, forming fatty aldehyde and glycerophosphocholine or glycerophosphoethanolamine, respectively and is specific for the sn-2-deacylated (lyso) form of plasmalogen. Plays an important role in lysoplasmalogen metabolism in the adipocyte tissue and macrophages. This Bos taurus (Bovine) protein is Lysoplasmalogenase TMEM86A (TMEM86A).